Here is a 261-residue protein sequence, read N- to C-terminus: Tryptophan synthase alpha chain (261 aa).

Residues Glu-47 and Asp-58 each act as proton acceptor in the active site.

This sequence belongs to the TrpA family. As to quaternary structure, tetramer of two alpha and two beta chains.

The enzyme catalyses (1S,2R)-1-C-(indol-3-yl)glycerol 3-phosphate + L-serine = D-glyceraldehyde 3-phosphate + L-tryptophan + H2O. The protein operates within amino-acid biosynthesis; L-tryptophan biosynthesis; L-tryptophan from chorismate: step 5/5. The alpha subunit is responsible for the aldol cleavage of indoleglycerol phosphate to indole and glyceraldehyde 3-phosphate. The chain is Tryptophan synthase alpha chain from Neisseria meningitidis serogroup B (strain ATCC BAA-335 / MC58).